The primary structure comprises 179 residues: Cytochrome b6-f complex iron-sulfur subunit (179 aa).

Residues 21–43 (LLTFGTVTGVALGALYPVVKYFI) form a helical membrane-spanning segment. The 102-residue stretch at 61 to 162 (GNDVSLSKFL…ANTVDDKIIL (102 aa)) folds into the Rieske domain. Cys-108, His-110, Cys-126, and His-129 together coordinate [2Fe-2S] cluster. Residues Cys-113 and Cys-128 are joined by a disulfide bond.

The protein belongs to the Rieske iron-sulfur protein family. The 4 large subunits of the cytochrome b6-f complex are cytochrome b6, subunit IV (17 kDa polypeptide, PetD), cytochrome f and the Rieske protein, while the 4 small subunits are PetG, PetL, PetM and PetN. The complex functions as a dimer. [2Fe-2S] cluster is required as a cofactor.

The protein resides in the cellular thylakoid membrane. The catalysed reaction is 2 oxidized [plastocyanin] + a plastoquinol + 2 H(+)(in) = 2 reduced [plastocyanin] + a plastoquinone + 4 H(+)(out). In terms of biological role, component of the cytochrome b6-f complex, which mediates electron transfer between photosystem II (PSII) and photosystem I (PSI), cyclic electron flow around PSI, and state transitions. This chain is Cytochrome b6-f complex iron-sulfur subunit, found in Desmonostoc sp. (strain PCC 7906) (Nostoc sp. (strain PCC 7906)).